Consider the following 874-residue polypeptide: Alanine--tRNA ligase (874 aa).

4 residues coordinate Zn(2+): histidine 564, histidine 568, cysteine 666, and histidine 670.

This sequence belongs to the class-II aminoacyl-tRNA synthetase family. The cofactor is Zn(2+).

The protein localises to the cytoplasm. The catalysed reaction is tRNA(Ala) + L-alanine + ATP = L-alanyl-tRNA(Ala) + AMP + diphosphate. In terms of biological role, catalyzes the attachment of alanine to tRNA(Ala) in a two-step reaction: alanine is first activated by ATP to form Ala-AMP and then transferred to the acceptor end of tRNA(Ala). Also edits incorrectly charged Ser-tRNA(Ala) and Gly-tRNA(Ala) via its editing domain. This Carboxydothermus hydrogenoformans (strain ATCC BAA-161 / DSM 6008 / Z-2901) protein is Alanine--tRNA ligase.